The sequence spans 144 residues: 3-hydroxyacyl-[acyl-carrier-protein] dehydratase FabZ (144 aa).

His-48 is an active-site residue.

It belongs to the thioester dehydratase family. FabZ subfamily.

It localises to the cytoplasm. It catalyses the reaction a (3R)-hydroxyacyl-[ACP] = a (2E)-enoyl-[ACP] + H2O. Its function is as follows. Involved in unsaturated fatty acids biosynthesis. Catalyzes the dehydration of short chain beta-hydroxyacyl-ACPs and long chain saturated and unsaturated beta-hydroxyacyl-ACPs. The polypeptide is 3-hydroxyacyl-[acyl-carrier-protein] dehydratase FabZ (Listeria welshimeri serovar 6b (strain ATCC 35897 / DSM 20650 / CCUG 15529 / CIP 8149 / NCTC 11857 / SLCC 5334 / V8)).